Consider the following 324-residue polypeptide: BURP domain-containing protein 5 (324 aa).

The signal sequence occupies residues 1-30 (MCATLCTLLDEISILILMLLLIQLEIRVSA). Residues 109 to 323 (FFLETNLQSS…QPDVVVWTRR (215 aa)) enclose the BURP domain.

As to expression, expressed in panicles.

The polypeptide is BURP domain-containing protein 5 (BURP5) (Oryza sativa subsp. japonica (Rice)).